The primary structure comprises 784 residues: MLRALWLFWILVAITVLFSKRCSAQESLSCDASGVCDGRSRSFTSIPSGLTAAMKSLDLSFNKITYIGHGDLRACANLQVLILKSSRINTIEGDAFYSLGSLEHLDLSDNHLSSLSSSWFGPLSSLKYLNLMGNPYQTLGVTSLFPNLTNLQTLRIGNVETFSEIRRIDFAGLTSLNELEIKALSLRNYQSQSLKSIRDIHHLTLHLSESAFLLEIFADILSSVRYLELRDTNLARFQFSPLPVDEVSSPMKKLAFRGSVLTDESFNELLKLLRYILELSEVEFDDCTLNGLGDFNPSESDVVSELGKVETVTIRRLHIPQFYLFYDLSTVYSLLEKVKRITVENSKVFLVPCSFSQHLKSLEFLDLSENLMVEEYLKNSACKGAWPSLQTLVLSQNHLRSMQKTGEILLTLKNLTSLDISRNTFHPMPDSCQWPEKMRFLNLSSTGIRVVKTCIPQTLEVLDVSNNNLDSFSLFLPRLQELYISRNKLKTLPDASLFPVLLVMKIRENAVSTFSKDQLGSFPKLETLEAGDNHFVCSCELLSFTMETPALAQILVDWPDSYLCDSPPRLHGHRLQDARPSVLECHQAALVSGVCCALLLLILLVGALCHHFHGLWYLRMMWAWLQAKRKPKKAPCRDVCYDAFVSYSEQDSHWVENLMVQQLENSDPPFKLCLHKRDFVPGKWIIDNIIDSIEKSHKTVFVLSENFVRSEWCKYELDFSHFRLFDENNDAAILVLLEPIERKAIPQRFCKLRKIMNTKTYLEWPLDEGQQEVFWVNLRTAIKS.

A signal peptide spans 1 to 24 (MLRALWLFWILVAITVLFSKRCSA). Residues 25–587 (QESLSCDASG…ARPSVLECHQ (563 aa)) are Extracellular-facing. An intrachain disulfide couples Cys30 to Cys36. 19 LRR repeats span residues 54–77 (MKSLDLSFNKITYIGHGDLRACAN), 78–101 (LQVLILKSSRINTIEGDAFYSLGS), 102–125 (LEHLDLSDNHLSSLSSSWFGPLSS), 126–150 (LKYLNLMGNPYQTLGVTSLFPNLTN), 151–175 (LQTLRIGNVETFSEIRRIDFAGLTS), 176–199 (LNELEIKALSLRNYQSQSLKSIRD), 200–223 (IHHLTLHLSESAFLLEIFADILSS), 224–250 (VRYLELRDTNLARFQFSPLPVDEVSSP), 251–278 (MKKLAFRGSVLTDESFNELLKLLRYILE), 279–308 (LSEVEFDDCTLNGLGDFNPSESDVVSELGK), 309–337 (VETVTIRRLHIPQFYLFYDLSTVYSLLEK), 338–361 (VKRITVENSKVFLVPCSFSQHLKS), 362–388 (LEFLDLSENLMVEEYLKNSACKGAWPS), 389–414 (LQTLVLSQNHLRSMQKTGEILLTLKN), 415–437 (LTSLDISRNTFHPMPDSCQWPEK), 438–457 (MRFLNLSSTGIRVVKTCIPQ), 458–478 (TLEVLDVSNNNLDSFSLFLPR), 479–500 (LQELYISRNKLKTLPDASLFPV), and 501–524 (LLVMKIRENAVSTFSKDQLGSFPK). N-linked (GlcNAc...) asparagine glycosylation occurs at Asn147. Cys353 and Cys382 form a disulfide bridge. Asn414 is a glycosylation site (N-linked (GlcNAc...) asparagine). A disulfide bridge connects residues Cys432 and Cys454. Asn442 carries an N-linked (GlcNAc...) asparagine glycan. The LRRCT domain maps to 525 to 576 (LETLEAGDNHFVCSCELLSFTMETPALAQILVDWPDSYLCDSPPRLHGHRLQ). A helical transmembrane segment spans residues 588–608 (AALVSGVCCALLLLILLVGAL). Residues 609–784 (CHHFHGLWYL…WVNLRTAIKS (176 aa)) are Cytoplasmic-facing. Residues 639–782 (VCYDAFVSYS…VFWVNLRTAI (144 aa)) enclose the TIR domain. Residue Lys754 forms a Glycyl lysine isopeptide (Lys-Gly) (interchain with G-Cter in ubiquitin) linkage. Positions 761–778 (YLEWPLDEGQQEVFWVNL) match the ATG16L1-binding motif motif.

This sequence belongs to the Toll-like receptor family. As to quaternary structure, interacts with LY96, TLR1 and TLR6 (via extracellular domain). TLR2 seems to exist in heterodimers with either TLR1 or TLR6 before stimulation by the ligand. The heterodimers form bigger oligomers in response to their corresponding ligands as well as further heterotypic associations with other receptors such as CD14 and/or CD36. Binds MYD88 (via TIR domain). Interacts with TICAM1. Interacts with CNPY3. Interacts with ATG16L1. Interacts with non-modified M.tuberculosis protein MPT83. Interacts with PPP1R11. Interacts with TIRAP. In terms of assembly, (Microbial infection) Interacts with Staphylococcus aureus protein SSL3; this interaction inhibits TLR2-mediated cytokine production. (Microbial infection) Interacts with Toxoplasma gondii micronemal protein 1 (MIC1); the interaction promotes activation of bone marrow-derived dendritic cells and macrophages. Interacts with Toxoplasma gondii micronemal protein 4 (MIC4); the interaction promotes activation of bone marrow-derived dendritic cells and macrophages. Ubiquitinated at Lys-754 by PPP1R11, leading to its degradation. Deubiquitinated by USP2. In terms of processing, glycosylation of Asn-442 is critical for secretion of the N-terminal ectodomain of TLR2. As to expression, detected in a macrophage cell line, smooth muscle, lung, spleen, thymus, brain and adipose tissue. Cell surface expression detected in lung alveolar macrophages, dendritic macrophages and at lower levels in lung macrophages (at protein level).

The protein localises to the cell membrane. The protein resides in the cytoplasmic vesicle. It is found in the phagosome membrane. It localises to the membrane raft. Its function is as follows. Cooperates with LY96 to mediate the innate immune response to bacterial lipoproteins and other microbial cell wall components. Cooperates with TLR1 or TLR6 to mediate the innate immune response to bacterial lipoproteins or lipopeptides. Acts via MYD88 and TRAF6, leading to NF-kappa-B activation, cytokine secretion and the inflammatory response. May also promote apoptosis in response to lipoproteins. Forms activation clusters composed of several receptors depending on the ligand, these clusters trigger signaling from the cell surface and subsequently are targeted to the Golgi in a lipid-raft dependent pathway. Forms the cluster TLR2:TLR6:CD14:CD36 in response to diacylated lipopeptides and TLR2:TLR1:CD14 in response to triacylated lipopeptides. Recognizes M.tuberculosis major T-antigen EsxA (ESAT-6) which inhibits downstream MYD88-dependent signaling. Acts as the major receptor for M.tuberculosis lipoproteins LprA, LprG, LpqH and PhoS1 (pstS1), in conjunction with TLR1 and for some but not all lipoproteins CD14 and/or CD36. The lipoproteins act as agonists to modulate antigen presenting cell functions in response to the pathogen. Recombinant MPT83 from M.tuberculosis stimulates secretion of cytokines (TNF-alpha, IL-6 and IL-12p40) by mouse macrophage cell lines in a TLR2-dependent fashion, which leads to increased host innate immunity responses against the bacterium. Lung macrophages which express low levels of TLR2 respond poorly to stimulation by M.tuberculosis LpqH. Required for normal uptake of M.tuberculosis, a process that is inhibited by M.tuberculosis LppM. Interacts with TICAM2. Functionally, (Microbial infection) Mediates activation of bone marrow-derived dendritic cells and macrophages, and production of pro-inflammatory cytokines, such as IL12 (IL12B/IL12A), triggered by Toxoplasma gondii micronemal protein 4 (MIC4) and micronemal protein 1 (MIC1). The chain is Toll-like receptor 2 (Tlr2) from Mus musculus (Mouse).